An 87-amino-acid chain; its full sequence is Small ribosomal subunit protein bS20 (87 aa).

Residues 1 to 12 (MANHKSALKRNR) show a composition bias toward basic residues. A disordered region spans residues 1–21 (MANHKSALKRNRQAAVRNARN).

It belongs to the bacterial ribosomal protein bS20 family.

Binds directly to 16S ribosomal RNA. The chain is Small ribosomal subunit protein bS20 from Syntrophotalea carbinolica (strain DSM 2380 / NBRC 103641 / GraBd1) (Pelobacter carbinolicus).